Reading from the N-terminus, the 183-residue chain is Orotate phosphoribosyltransferase (183 aa).

5-phospho-alpha-D-ribose 1-diphosphate is bound by residues Arg21, Lys88, and 112–120; that span reads EDVVTTGES. Thr116 and Arg144 together coordinate orotate.

It belongs to the purine/pyrimidine phosphoribosyltransferase family. PyrE subfamily. Homodimer. The cofactor is Mg(2+).

It catalyses the reaction orotidine 5'-phosphate + diphosphate = orotate + 5-phospho-alpha-D-ribose 1-diphosphate. It participates in pyrimidine metabolism; UMP biosynthesis via de novo pathway; UMP from orotate: step 1/2. In terms of biological role, catalyzes the transfer of a ribosyl phosphate group from 5-phosphoribose 1-diphosphate to orotate, leading to the formation of orotidine monophosphate (OMP). The protein is Orotate phosphoribosyltransferase of Thermus thermophilus (strain ATCC 27634 / DSM 579 / HB8).